The following is a 477-amino-acid chain: MRKALRSLLAASMLIGAIGAGSATAEAASITAPQADIKDRILKIPGMKFVEEKPYQGYRYLVMTYRQPVDHRNPGKGTFEQRFTLLHKDTDRPTVFFTSGYNVSTNPSRSEPTRIVDGNQVSMEYRFFTPSRPQPADWSKLDIWQAASDQHRLYQALKPVYGKNWLATGGSKGGMTATYFRRFYPNDMNGTVAYVAPNDVNDKEDSAYDKFFQNVGDKACRTQLNSVQREALVRRDEIVARYEKWAKENGKTFKVVGSADKAYENVVLDLVWSFWQYHLQSDCASVPATKASTDELYKFIDDISGFDGYTDQGLERFTPYYYQAGTQLGAPTVKNPHLKGVLRYPGINQPRSYVPRDIPMTFRPGAMADVDRWVREDSRNMLFVYGQNDPWSGEPFRLGKGAAARHDYRFYAPGGNHGSNIAQLVADERAKATAEVLKWAGVAPQAVQKDEKAAKPLAPFDAKLDRVKNDKQSALRP.

A signal peptide spans 1–27 (MRKALRSLLAASMLIGAIGAGSATAEA). A propeptide spanning residues 28-33 (ASITAP) is cleaved from the precursor. A disordered region spans residues 448–477 (QKDEKAAKPLAPFDAKLDRVKNDKQSALRP). A compositionally biased stretch (basic and acidic residues) spans 462 to 477 (AKLDRVKNDKQSALRP).

It belongs to the peptidase S37 family.

Its subcellular location is the secreted. It localises to the cell surface. Completely inhibited by the serine protease inhibitor phenylmethylsulfonyl fluoride. Partially inhibited by the serine protease inhibitor Pefabloc. Not inhibited by cysteine proteinase-specific or metalloproteinase-specific inhibitors. Not inhibited by prolinal or its derivatives. EDTA and EGTA both partially inhibit this enzyme. EDTA has no effect on activity. Its function is as follows. Has proline-specific tripeptidyl aminopeptidase and tetrapeptidyl aminopeptidase activity. Activity is highest against tripeptides containing an Ala-Pro motif. Involved in the final processing of transglutaminase, by removing either the tetrapeptide Phe-Arg-Ala-Pro left after TAMEP or SAM-P45 hydrolysis, or the tripeptide Arg-Ala-Pro left after SGMP II hydrolysis in a single step. The polypeptide is Prolyl tri/tetrapeptidyl aminopeptidase (ptp) (Streptomyces mobaraensis (Streptoverticillium mobaraense)).